Here is a 500-residue protein sequence, read N- to C-terminus: Glutamate--tRNA ligase (500 aa).

A 'HIGH' region motif is present at residues 13–23 (PSPTGTPHVGM). Positions 258–262 (KLSKR) match the 'KMSKS' region motif. Lys-261 is an ATP binding site.

This sequence belongs to the class-I aminoacyl-tRNA synthetase family. Glutamate--tRNA ligase type 1 subfamily. Monomer.

The protein resides in the cytoplasm. It carries out the reaction tRNA(Glu) + L-glutamate + ATP = L-glutamyl-tRNA(Glu) + AMP + diphosphate. Catalyzes the attachment of glutamate to tRNA(Glu) in a two-step reaction: glutamate is first activated by ATP to form Glu-AMP and then transferred to the acceptor end of tRNA(Glu). The polypeptide is Glutamate--tRNA ligase (Corynebacterium jeikeium (strain K411)).